A 429-amino-acid polypeptide reads, in one-letter code: Adenylosuccinate synthetase (429 aa).

Residues 12-18 (GDEGKGK) and 40-42 (GHT) each bind GTP. D13 acts as the Proton acceptor in catalysis. Mg(2+)-binding residues include D13 and G40. IMP is bound by residues 13–16 (DEGK), 38–41 (NAGH), T129, R143, Q223, T238, and R302. H41 functions as the Proton donor in the catalytic mechanism. 298-304 (VVTGRKR) provides a ligand contact to substrate. GTP is bound by residues R304, 330 to 332 (KLD), and 412 to 414 (STS).

It belongs to the adenylosuccinate synthetase family. In terms of assembly, homodimer. Mg(2+) serves as cofactor.

Its subcellular location is the cytoplasm. It catalyses the reaction IMP + L-aspartate + GTP = N(6)-(1,2-dicarboxyethyl)-AMP + GDP + phosphate + 2 H(+). It participates in purine metabolism; AMP biosynthesis via de novo pathway; AMP from IMP: step 1/2. In terms of biological role, plays an important role in the de novo pathway of purine nucleotide biosynthesis. Catalyzes the first committed step in the biosynthesis of AMP from IMP. The chain is Adenylosuccinate synthetase from Bartonella bacilliformis (strain ATCC 35685 / KC583 / Herrer 020/F12,63).